Consider the following 317-residue polypeptide: Hydroxyacyl-CoA dehydrogenase ChsB1 (317 aa).

Positions 32, 51, 82, 83, 108, 168, 181, 185, and 215 each coordinate NAD(+). Active-site residues include Ser-168, Tyr-181, and Lys-185.

This sequence belongs to the short-chain dehydrogenases/reductases (SDR) family. As to quaternary structure, homodimer, with 1 active site on each face.

The enzyme catalyses (22S)-hydroxy-3-oxo-chol-4-ene-24-oyl-CoA + NAD(+) = 3,22-dioxochol-4-en-24-oyl-CoA + NADH + H(+). Its pathway is steroid metabolism; cholesterol degradation. A reversible dehydrogenase involved in cholesterol side-chain degradation. Catalyzes the oxidation of hydroxyl-cholesterol-CoA ester metabolic intermediate (22S)-HOCO-CoA (3-oxo-chol-4-ene-(22S)-hydroxy-24-oyl-CoA), the product of ChsH3, has no activity on (22R)-HOCO-CoA (the product of EchA19). Also acts on (3R)-hydroxyoctanoyl-CoA and 17-beta-hydroxyandrost-4-en-3-one, but not on 7-alpha-hydroxyandrost-4-en-3-one, uses NAD(+) but not NADP(+). In Mycobacterium tuberculosis (strain ATCC 25618 / H37Rv), this protein is Hydroxyacyl-CoA dehydrogenase ChsB1.